The chain runs to 98 residues: MALTKAEMSEYLFEKLGLSKRDAKELVELFFEEVRRALENGEQVKLSGFGNFDLRDKNQRPGRNPKTGEDIPITARRVVTFRPGQKLKSRVENASPKE.

Residues 49–71 (FGNFDLRDKNQRPGRNPKTGEDI) are disordered.

This sequence belongs to the bacterial histone-like protein family. In terms of assembly, heterodimer of an alpha and a beta chain.

In terms of biological role, this protein is one of the two subunits of integration host factor, a specific DNA-binding protein that functions in genetic recombination as well as in transcriptional and translational control. This chain is Integration host factor subunit alpha, found in Pectobacterium atrosepticum (strain SCRI 1043 / ATCC BAA-672) (Erwinia carotovora subsp. atroseptica).